Consider the following 358-residue polypeptide: UDP-N-acetylglucosamine--N-acetylmuramyl-(pentapeptide) pyrophosphoryl-undecaprenol N-acetylglucosamine transferase (358 aa).

Residues 10-12, N124, S196, and Q293 contribute to the UDP-N-acetyl-alpha-D-glucosamine site; that span reads TGG.

The protein belongs to the glycosyltransferase 28 family. MurG subfamily.

The protein localises to the cell membrane. The enzyme catalyses di-trans,octa-cis-undecaprenyl diphospho-N-acetyl-alpha-D-muramoyl-L-alanyl-D-glutamyl-meso-2,6-diaminopimeloyl-D-alanyl-D-alanine + UDP-N-acetyl-alpha-D-glucosamine = di-trans,octa-cis-undecaprenyl diphospho-[N-acetyl-alpha-D-glucosaminyl-(1-&gt;4)]-N-acetyl-alpha-D-muramoyl-L-alanyl-D-glutamyl-meso-2,6-diaminopimeloyl-D-alanyl-D-alanine + UDP + H(+). Its pathway is cell wall biogenesis; peptidoglycan biosynthesis. Functionally, cell wall formation. Catalyzes the transfer of a GlcNAc subunit on undecaprenyl-pyrophosphoryl-MurNAc-pentapeptide (lipid intermediate I) to form undecaprenyl-pyrophosphoryl-MurNAc-(pentapeptide)GlcNAc (lipid intermediate II). This Exiguobacterium sp. (strain ATCC BAA-1283 / AT1b) protein is UDP-N-acetylglucosamine--N-acetylmuramyl-(pentapeptide) pyrophosphoryl-undecaprenol N-acetylglucosamine transferase.